A 169-amino-acid polypeptide reads, in one-letter code: Endoribonuclease YbeY (169 aa).

Residues histidine 128, histidine 132, and histidine 138 each coordinate Zn(2+).

The protein belongs to the endoribonuclease YbeY family. It depends on Zn(2+) as a cofactor.

Its subcellular location is the cytoplasm. Its function is as follows. Single strand-specific metallo-endoribonuclease involved in late-stage 70S ribosome quality control and in maturation of the 3' terminus of the 16S rRNA. This Cyanothece sp. (strain PCC 7425 / ATCC 29141) protein is Endoribonuclease YbeY.